The following is a 177-amino-acid chain: Adenine phosphoribosyltransferase (177 aa).

It belongs to the purine/pyrimidine phosphoribosyltransferase family. In terms of assembly, homodimer.

It is found in the cytoplasm. It catalyses the reaction AMP + diphosphate = 5-phospho-alpha-D-ribose 1-diphosphate + adenine. It functions in the pathway purine metabolism; AMP biosynthesis via salvage pathway; AMP from adenine: step 1/1. In terms of biological role, catalyzes a salvage reaction resulting in the formation of AMP, that is energically less costly than de novo synthesis. This Leuconostoc citreum (strain KM20) protein is Adenine phosphoribosyltransferase.